The following is a 145-amino-acid chain: D-aminoacyl-tRNA deacylase (145 aa).

Residues 137–138 carry the Gly-cisPro motif, important for rejection of L-amino acids motif; that stretch reads GP.

It belongs to the DTD family. As to quaternary structure, homodimer.

The protein localises to the cytoplasm. The enzyme catalyses glycyl-tRNA(Ala) + H2O = tRNA(Ala) + glycine + H(+). It carries out the reaction a D-aminoacyl-tRNA + H2O = a tRNA + a D-alpha-amino acid + H(+). In terms of biological role, an aminoacyl-tRNA editing enzyme that deacylates mischarged D-aminoacyl-tRNAs. Also deacylates mischarged glycyl-tRNA(Ala), protecting cells against glycine mischarging by AlaRS. Acts via tRNA-based rather than protein-based catalysis; rejects L-amino acids rather than detecting D-amino acids in the active site. By recycling D-aminoacyl-tRNA to D-amino acids and free tRNA molecules, this enzyme counteracts the toxicity associated with the formation of D-aminoacyl-tRNA entities in vivo and helps enforce protein L-homochirality. The polypeptide is D-aminoacyl-tRNA deacylase (Dichelobacter nodosus (strain VCS1703A)).